The chain runs to 164 residues: HTH-type transcriptional regulator PapX (164 aa).

The HTH marR-type domain occupies 25–159; it reads EHLLMQLCIR…FEVISKKLLA (135 aa).

The protein localises to the cytoplasm. In Escherichia coli, this protein is HTH-type transcriptional regulator PapX (papX).